The primary structure comprises 1086 residues: Lon protease homolog, mitochondrial (1086 aa).

A mitochondrion-targeting transit peptide spans 1–55 (MLRTSCTSSLRRVVGKYVVSPLVASQIRFATSSVRSQPYLLNSELTELPAQFKRY). Residues 61-176 (TEKPEGDVPE…EPNEIVTNAG (116 aa)) form a disordered region. Residues 69-83 (PESGPEPSGESGISE) are compositionally biased toward low complexity. The segment covering 85–120 (SNVENDKHDGNDEIKPEAEKNEKDEIEKPEIDKDAI) has biased composition (basic and acidic residues). The segment covering 124-163 (DGVSESSVENVSGSSSAAGGASAPPSGNSNNNNNNNNNNN) has biased composition (low complexity). A Lon N-terminal domain is found at 183 to 406 (LLAIPMKDRP…KALELLKVEL (224 aa)). ATP is bound at residue 558-565 (GPPGTGKT). Basic and acidic residues-rich tracts occupy residues 767-782 (EAREGESKSKSEEAKS) and 815-827 (KVDEAKPVESEEL). 2 disordered regions span residues 767-788 (EAREGESKSKSEEAKSEAITGS) and 800-835 (KAQSIEEPSVESASQKVDEAKPVESEELKSDEEEEE). Positions 871 to 1059 (IPPPGVATGL…QDVFDEIFPN (189 aa)) constitute a Lon proteolytic domain. Active-site residues include serine 965 and lysine 1008.

Belongs to the peptidase S16 family. As to quaternary structure, homohexamer or homoheptamer. Organized in a ring with a central cavity.

The protein resides in the mitochondrion matrix. The catalysed reaction is Hydrolysis of proteins in presence of ATP.. In terms of biological role, ATP-dependent serine protease that mediates the selective degradation of misfolded, unassembled or oxidatively damaged polypeptides as well as certain short-lived regulatory proteins in the mitochondrial matrix. May also have a chaperone function in the assembly of inner membrane protein complexes. Participates in the regulation of mitochondrial gene expression and in the maintenance of the integrity of the mitochondrial genome. Binds to mitochondrial DNA in a site-specific manner. The sequence is that of Lon protease homolog, mitochondrial from Scheffersomyces stipitis (strain ATCC 58785 / CBS 6054 / NBRC 10063 / NRRL Y-11545) (Yeast).